The chain runs to 238 residues: MRPSGRTAQQVRPITLTRNFTAHAEGSVLVEFGNTKVICTASVEENVPRWLKGKGKGWVTAEYGMLPRATHTRNRREAASGKQGGRTMEIQRLIARSLRAAVDLEALGEQMITVDCDVIQADGGTRTASITGASVALADAINHMIATGKLKSNPMKGHVAAVSVGIYNGEAICDLEYVEDSAADTDMNVVMMEDGKMIEVQGTAEEAPFSHQELLDMLALAQQGINDIIEKQKAALAE.

Residues Arg-86 and 124 to 126 (GTR) contribute to the phosphate site.

Belongs to the RNase PH family. Homohexameric ring arranged as a trimer of dimers.

The enzyme catalyses tRNA(n+1) + phosphate = tRNA(n) + a ribonucleoside 5'-diphosphate. Its function is as follows. Phosphorolytic 3'-5' exoribonuclease that plays an important role in tRNA 3'-end maturation. Removes nucleotide residues following the 3'-CCA terminus of tRNAs; can also add nucleotides to the ends of RNA molecules by using nucleoside diphosphates as substrates, but this may not be physiologically important. Probably plays a role in initiation of 16S rRNA degradation (leading to ribosome degradation) during starvation. In Aliivibrio fischeri (strain ATCC 700601 / ES114) (Vibrio fischeri), this protein is Ribonuclease PH.